The primary structure comprises 109 residues: Encapsulin nanocompartment cargo protein EncD (109 aa).

A Fe cation-binding site is contributed by Glu-47. The disordered stretch occupies residues 61-94 (AGGRGAAAPTPAREAPAEAPRLARGSADELHEAA). Over residues 66–85 (AAAPTPAREAPAEAPRLARG) the composition is skewed to low complexity. A probable targeting peptide region spans residues 100 to 106 (LTVGSLR).

It is found in the encapsulin nanocompartment. Functionally, cargo protein of a type 1 encapsulin nanocompartment. May help nucleate Fe atoms in the interior of the encapsulin nanocompartment. Present in about 47 copies/encapsulin nanocompartment. This Myxococcus xanthus (strain DK1622) protein is Encapsulin nanocompartment cargo protein EncD.